Consider the following 334-residue polypeptide: Sulfhydrogenase 2 subunit beta (334 aa).

2 consecutive 4Fe-4S ferredoxin-type domains span residues 220–250 and 294–328; these read KVWK…VCDT and CKNY…VLDE. The [4Fe-4S] cluster site is built by C229, C232, C235, C239, C306, C309, C312, and C316.

Dimer of heterotetramer of alpha, beta, gamma and delta subunits. The nickel-containing alpha and delta subunits constitute the hydrogenase activity. The beta and gamma subunits (flavin-containing dimer) constitute the sulfur reductase activity. It depends on [4Fe-4S] cluster as a cofactor.

It is found in the cytoplasm. The enzyme catalyses n sulfur + H2 = (n-1) sulfur + hydrogen sulfide + H(+). In terms of biological role, part of a bifunctional enzyme complex that functions as a hydrogen-evolving hydrogenase with sulfur-reducing activity. May play a role in hydrogen cycling during fermentative growth. Activity exhibited with NAD in addition to NADPH. The beta and gamma subunits form the sulfur-reducing component that catalyzes the cytoplasmic production of hydrogen sulfide in the presence of elemental sulfur. The protein is Sulfhydrogenase 2 subunit beta of Pyrococcus furiosus (strain ATCC 43587 / DSM 3638 / JCM 8422 / Vc1).